We begin with the raw amino-acid sequence, 123 residues long: Phosphoribosyl-AMP cyclohydrolase (123 aa).

D76 contacts Mg(2+). Zn(2+) is bound at residue C77. 2 residues coordinate Mg(2+): D78 and D80. The Zn(2+) site is built by C93 and C100.

It belongs to the PRA-CH family. Homodimer. Mg(2+) is required as a cofactor. Zn(2+) serves as cofactor.

The protein localises to the cytoplasm. It catalyses the reaction 1-(5-phospho-beta-D-ribosyl)-5'-AMP + H2O = 1-(5-phospho-beta-D-ribosyl)-5-[(5-phospho-beta-D-ribosylamino)methylideneamino]imidazole-4-carboxamide. It functions in the pathway amino-acid biosynthesis; L-histidine biosynthesis; L-histidine from 5-phospho-alpha-D-ribose 1-diphosphate: step 3/9. Catalyzes the hydrolysis of the adenine ring of phosphoribosyl-AMP. This chain is Phosphoribosyl-AMP cyclohydrolase, found in Methanocorpusculum labreanum (strain ATCC 43576 / DSM 4855 / Z).